A 396-amino-acid chain; its full sequence is Phosphoglycerate kinase (396 aa).

Residues 21-23 (DLN), Arg-36, 59-62 (HLGR), Arg-113, and Arg-146 contribute to the substrate site. ATP-binding positions include Lys-197, Glu-319, and 345–348 (GGDT).

This sequence belongs to the phosphoglycerate kinase family. Monomer.

The protein localises to the cytoplasm. The catalysed reaction is (2R)-3-phosphoglycerate + ATP = (2R)-3-phospho-glyceroyl phosphate + ADP. It functions in the pathway carbohydrate degradation; glycolysis; pyruvate from D-glyceraldehyde 3-phosphate: step 2/5. The chain is Phosphoglycerate kinase from Legionella pneumophila (strain Paris).